A 316-amino-acid chain; its full sequence is MFKFDKKQEVFEIGGVKFGGQPGEFPTVLVSTMFYARHKIVTDEDKGIFDRAAAETLWNTQVSLSDATGNPYVNQIVGETPESIKRYIDWFVEIDDRTPFLIDSSAGNVRAAAAQYCTEIGVADRAIHNSINASIEQEEIDVLTESDVEAAIVLAFNATDPTVKGKMDILEVGGSGLTKGMLQISEECGIKYPLIDVAAMPLGAGSGPTIRSIPTMKAKFGLPIGGGYHNMASAWDWLRKFKKTQPDAKAIYMPADIGTNLVAQIAGSDYLLYGPIENVNQIFPAVAMVDIMLGETAKDLGVEIADLENHPVTKLT.

The protein belongs to the MtrH family. As to quaternary structure, the complex is composed of 8 subunits; MtrA, MtrB, MtrC, MtrD, MtrE, MtrF, MtrG and MtrH.

The catalysed reaction is 5-methyl-5,6,7,8-tetrahydromethanopterin + coenzyme M + 2 Na(+)(in) = 5,6,7,8-tetrahydromethanopterin + methyl-coenzyme M + 2 Na(+)(out). The protein operates within one-carbon metabolism; methanogenesis from CO(2); methyl-coenzyme M from 5,10-methylene-5,6,7,8-tetrahydromethanopterin: step 2/2. In terms of biological role, part of a complex that catalyzes the formation of methyl-coenzyme M and tetrahydromethanopterin from coenzyme M and methyl-tetrahydromethanopterin. This is an energy-conserving, sodium-ion translocating step. MtrH catalyzes the transfer of the methyl group from methyl-tetrahydromethanopterin to the corrinoid prosthetic group of MtrA. This chain is Tetrahydromethanopterin S-methyltransferase subunit H, found in Methanosarcina barkeri (strain Fusaro / DSM 804).